The following is a 231-amino-acid chain: Sensory transduction protein BceR (231 aa).

One can recognise a Response regulatory domain in the interval 3-116 (KLLLIEDDES…VLIAKIQAMF (114 aa)). 4-aspartylphosphate is present on D52. A DNA-binding region (ompR/PhoB-type) is located at residues 127–225 (STIKTWCGAA…KVGQGYIAKE (99 aa)).

In terms of processing, phosphorylated by BceS.

Its subcellular location is the cytoplasm. Its function is as follows. Member of the two-component regulatory system BceS/BceR involved in the regulation of bacitracin resistance. When activated by BceS, binds to the upstream region of the bceAB promoter and up-regulates the expression of these two genes. This Bacillus subtilis (strain 168) protein is Sensory transduction protein BceR (bceR).